A 185-amino-acid chain; its full sequence is Elongation factor P (185 aa).

It belongs to the elongation factor P family.

Its subcellular location is the cytoplasm. It functions in the pathway protein biosynthesis; polypeptide chain elongation. In terms of biological role, involved in peptide bond synthesis. Stimulates efficient translation and peptide-bond synthesis on native or reconstituted 70S ribosomes in vitro. Probably functions indirectly by altering the affinity of the ribosome for aminoacyl-tRNA, thus increasing their reactivity as acceptors for peptidyl transferase. In Limosilactobacillus fermentum (strain NBRC 3956 / LMG 18251) (Lactobacillus fermentum), this protein is Elongation factor P.